A 285-amino-acid polypeptide reads, in one-letter code: Extracellular metalloprotease SMAC_06893 (285 aa).

The signal sequence occupies residues 1–18 (MQIKSLLLAAAAAPAALG). Position 197 (histidine 197) interacts with Zn(2+). Glutamate 198 is a catalytic residue. Histidine 201 contributes to the Zn(2+) binding site. A disulfide bridge links cysteine 233 with cysteine 260. A glycan (N-linked (GlcNAc...) asparagine) is linked at asparagine 282.

The protein belongs to the peptidase M43B family.

It localises to the secreted. Secreted metalloproteinase that allows assimilation of proteinaceous substrates. The protein is Extracellular metalloprotease SMAC_06893 of Sordaria macrospora (strain ATCC MYA-333 / DSM 997 / K(L3346) / K-hell).